The chain runs to 209 residues: ATP-dependent Clp protease proteolytic subunit (209 aa).

The active-site Nucleophile is the S101. H126 is a catalytic residue.

The protein belongs to the peptidase S14 family. Component of the chloroplastic Clp protease core complex.

The protein localises to the plastid. It localises to the chloroplast stroma. It catalyses the reaction Hydrolysis of proteins to small peptides in the presence of ATP and magnesium. alpha-casein is the usual test substrate. In the absence of ATP, only oligopeptides shorter than five residues are hydrolyzed (such as succinyl-Leu-Tyr-|-NHMec, and Leu-Tyr-Leu-|-Tyr-Trp, in which cleavage of the -Tyr-|-Leu- and -Tyr-|-Trp bonds also occurs).. Cleaves peptides in various proteins in a process that requires ATP hydrolysis. Has a chymotrypsin-like activity. Plays a major role in the degradation of misfolded proteins. The protein is ATP-dependent Clp protease proteolytic subunit of Huperzia lucidula (Shining clubmoss).